A 365-amino-acid polypeptide reads, in one-letter code: Dihydroorotate dehydrogenase (quinone) (365 aa).

Residues 61–65 (AGFDK) and Ser85 each bind FMN. Substrate is bound at residue Lys65. A substrate-binding site is contributed by 110-114 (NRMGF). Asn139 and Asn170 together coordinate FMN. Asn170 is a binding site for substrate. Ser173 functions as the Nucleophile in the catalytic mechanism. Asn175 is a binding site for substrate. Positions 214 and 242 each coordinate FMN. 243–244 (NT) serves as a coordination point for substrate. FMN contacts are provided by residues Gly266, Gly295, and 316–317 (YS).

Belongs to the dihydroorotate dehydrogenase family. Type 2 subfamily. Monomer. Requires FMN as cofactor.

It is found in the cell membrane. It carries out the reaction (S)-dihydroorotate + a quinone = orotate + a quinol. The protein operates within pyrimidine metabolism; UMP biosynthesis via de novo pathway; orotate from (S)-dihydroorotate (quinone route): step 1/1. Its function is as follows. Catalyzes the conversion of dihydroorotate to orotate with quinone as electron acceptor. This Bradyrhizobium diazoefficiens (strain JCM 10833 / BCRC 13528 / IAM 13628 / NBRC 14792 / USDA 110) protein is Dihydroorotate dehydrogenase (quinone).